We begin with the raw amino-acid sequence, 364 residues long: Dermonecrotic toxin SPH (364 aa).

Residues 1–17 form the signal peptide; sequence MIRIFALITALAITVKC. H29 serves as the catalytic Nucleophile. Mg(2+) contacts are provided by E49 and D51. H65 is an active-site residue. Intrachain disulfides connect C69-C75 and C71-C215. Mg(2+) is bound at residue D109.

The protein belongs to the arthropod phospholipase D family. The cofactor is Mg(2+). As to expression, expressed in salivary glands.

It localises to the secreted. The enzyme catalyses an N-(acyl)-sphingosylphosphocholine = an N-(acyl)-sphingosyl-1,3-cyclic phosphate + choline. It catalyses the reaction an N-(acyl)-sphingosylphosphoethanolamine = an N-(acyl)-sphingosyl-1,3-cyclic phosphate + ethanolamine. It carries out the reaction a 1-acyl-sn-glycero-3-phosphocholine = a 1-acyl-sn-glycero-2,3-cyclic phosphate + choline. The catalysed reaction is a 1-acyl-sn-glycero-3-phosphoethanolamine = a 1-acyl-sn-glycero-2,3-cyclic phosphate + ethanolamine. Dermonecrotic toxins cleave the phosphodiester linkage between the phosphate and headgroup of certain phospholipids (sphingolipid and lysolipid substrates), forming an alcohol (often choline) and a cyclic phosphate. Acts on sphingomyelin (SM). It may also act on ceramide phosphoethanolamine (CPE), lysophosphatidylcholine (LPC) and lysophosphatidylethanolamine (LPE), but not on lysophosphatidylserine (LPS), and lysophosphatidylglycerol (LPG). It acts by transphosphatidylation, releasing exclusively cyclic phosphate products as second products. Induces dermonecrosis, hemolysis, increased vascular permeability, edema, inflammatory response, and platelet aggregation. The protein is Dermonecrotic toxin SPH (SPH) of Ixodes scapularis (Black-legged tick).